We begin with the raw amino-acid sequence, 170 residues long: MDVTIQQPWFKRALGPFYPSRLFDQFFGEGLFESDLLPFLSSTISPYYRQSLFRTALDSGISEVRSDRDKFVIFLDVKHFSPEDLTVKVLGDFVEIHGKHNERQDDHGYISREFHRRYRLPTAVDQSALSCSLSADGMLTFSGPKIVDPSHSERPIPVSREEKPSSAPSS.

N-acetylmethionine is present on methionine 1. Residues 1-63 (MDVTIQQPWF…RTALDSGISE (63 aa)) form a required for complex formation with BFSP1 and BFSP2 region. Position 6 is a deamidated glutamine; partial (glutamine 6). Serine 45 is modified (phosphoserine). Glutamine 50 carries the post-translational modification Deamidated glutamine; partial. Residues 52–161 (LFRTALDSGI…SERPIPVSRE (110 aa)) enclose the sHSP domain. N6-acetyllysine occurs at positions 70 and 99. Histidine 100 is a binding site for Zn(2+). Position 101 is a deamidated asparagine; partial (asparagine 101). The Zn(2+) site is built by glutamate 102, histidine 107, and histidine 151. The disordered stretch occupies residues 144 to 170 (PKIVDPSHSERPIPVSREEKPSSAPSS). The span at 148 to 164 (DPSHSERPIPVSREEKP) shows a compositional bias: basic and acidic residues. An O-linked (GlcNAc) serine glycan is attached at serine 159.

It belongs to the small heat shock protein (HSP20) family. As to quaternary structure, heteromer composed of three CRYAA and one CRYAB subunits. Inter-subunit bridging via zinc ions enhances stability, which is crucial as there is no protein turn over in the lens. Can also form homodimers and homotetramers (dimers of dimers) which serve as the building blocks of homooligomers. Within homooligomers, the zinc-binding motif is created from residues of 3 different molecules. His-100 and Glu-102 from one molecule are ligands of the zinc ion, and His-107 and His-151 residues from additional molecules complete the site with tetrahedral coordination geometry. Part of a complex required for lens intermediate filament formation composed of BFSP1, BFSP2 and CRYAA. Post-translationally, acetylation at Lys-70 may increase chaperone activity. In terms of processing, undergoes age-dependent proteolytical cleavage at the C-terminus.

The protein resides in the cytoplasm. Its subcellular location is the nucleus. Contributes to the transparency and refractive index of the lens. Acts as a chaperone, preventing aggregation of various proteins under a wide range of stress conditions. Required for the correct formation of lens intermediate filaments as part of a complex composed of BFSP1, BFSP2 and CRYAA. The sequence is that of Alpha-crystallin A chain (CRYAA) from Bradypus variegatus (Brown-throated three-fingered sloth).